The sequence spans 200 residues: Holliday junction branch migration complex subunit RuvA (200 aa).

Residues M1–S65 are domain I. Positions S66–P144 are domain II. The tract at residues V145 to S149 is flexible linker. The interval T150–S200 is domain III.

Belongs to the RuvA family. In terms of assembly, homotetramer. Forms an RuvA(8)-RuvB(12)-Holliday junction (HJ) complex. HJ DNA is sandwiched between 2 RuvA tetramers; dsDNA enters through RuvA and exits via RuvB. An RuvB hexamer assembles on each DNA strand where it exits the tetramer. Each RuvB hexamer is contacted by two RuvA subunits (via domain III) on 2 adjacent RuvB subunits; this complex drives branch migration. In the full resolvosome a probable DNA-RuvA(4)-RuvB(12)-RuvC(2) complex forms which resolves the HJ.

It localises to the cytoplasm. In terms of biological role, the RuvA-RuvB-RuvC complex processes Holliday junction (HJ) DNA during genetic recombination and DNA repair, while the RuvA-RuvB complex plays an important role in the rescue of blocked DNA replication forks via replication fork reversal (RFR). RuvA specifically binds to HJ cruciform DNA, conferring on it an open structure. The RuvB hexamer acts as an ATP-dependent pump, pulling dsDNA into and through the RuvAB complex. HJ branch migration allows RuvC to scan DNA until it finds its consensus sequence, where it cleaves and resolves the cruciform DNA. In Chlamydia trachomatis serovar A (strain ATCC VR-571B / DSM 19440 / HAR-13), this protein is Holliday junction branch migration complex subunit RuvA.